The chain runs to 375 residues: Growth/differentiation factor 8 (375 aa).

Residues 1–18 (MQKLQIFVYIYLFMLTVA) form the signal peptide. The propeptide occupies 19 to 266 (GPVDLNENSE…VTDTPKRARR (248 aa)). 2 N-linked (GlcNAc...) asparagine glycosylation sites follow: asparagine 48 and asparagine 71. Intrachain disulfides connect cysteine 272-cysteine 282, cysteine 281-cysteine 340, cysteine 309-cysteine 372, and cysteine 313-cysteine 374.

The protein belongs to the TGF-beta family. As to quaternary structure, homodimer; disulfide-linked. Interacts with WFIKKN2, leading to inhibit its activity. Interacts with FSTL3. Post-translationally, synthesized as large precursor molecule that undergoes proteolytic cleavage to generate an N-terminal propeptide and a disulfide linked C-terminal dimer, which is the biologically active molecule. The circulating form consists of a latent complex of the C-terminal dimer and other proteins, including its propeptide, which maintain the C-terminal dimer in a latent, inactive state. Ligand activation requires additional cleavage of the prodomain by a tolloid-like metalloproteinase.

The protein resides in the secreted. Functionally, acts specifically as a negative regulator of skeletal muscle growth. This chain is Growth/differentiation factor 8 (MSTN), found in Sylvicapra grimmia (Grey duiker).